The sequence spans 278 residues: Tetraspanin-13 (278 aa).

The Cytoplasmic portion of the chain corresponds to 1 to 25; sequence MARDKEDQNNENPSIVQNMSFPFNT. The chain crosses the membrane as a helical span at residues 26-46; sequence IFLISSAIFLVTAAFWFVAVM. Over 47–62 the chain is Extracellular; the sequence is TLHYRTDECNRFVTTP. The helical transmembrane segment at 63–83 threads the bilayer; it reads GIFISFSLLAMSLTGFYAAYF. The Cytoplasmic portion of the chain corresponds to 84 to 92; the sequence is KSDCLFRIH. Residues 93–113 traverse the membrane as a helical segment; sequence FFIFFLWMFVVVSKAIFVIFL. Residues 114–249 lie on the Extracellular side of the membrane; the sequence is HKETNPRLFP…DVHNTSFSIT (136 aa). 3 N-linked (GlcNAc...) asparagine glycosylation sites follow: N202, N220, and N243. The chain crosses the membrane as a helical span at residues 250-270; the sequence is VNIIHIIFSLCIGMTGWFAWL. At 271 to 278 the chain is on the cytoplasmic side; that stretch reads RILRESQK.

The protein belongs to the tetraspanin (TM4SF) family.

It is found in the membrane. May be involved in the regulation of cell differentiation. In Arabidopsis thaliana (Mouse-ear cress), this protein is Tetraspanin-13 (TET13).